Reading from the N-terminus, the 252-residue chain is Glucosamine-6-phosphate deaminase (252 aa).

Aspartate 67 serves as the catalytic Proton acceptor; for enolization step. Asparagine 137 (for ring-opening step) is an active-site residue. Histidine 139 functions as the Proton acceptor; for ring-opening step in the catalytic mechanism. Glutamate 144 acts as the For ring-opening step in catalysis.

The protein belongs to the glucosamine/galactosamine-6-phosphate isomerase family. NagB subfamily.

The enzyme catalyses alpha-D-glucosamine 6-phosphate + H2O = beta-D-fructose 6-phosphate + NH4(+). Its pathway is amino-sugar metabolism; N-acetylneuraminate degradation; D-fructose 6-phosphate from N-acetylneuraminate: step 5/5. Catalyzes the reversible isomerization-deamination of glucosamine 6-phosphate (GlcN6P) to form fructose 6-phosphate (Fru6P) and ammonium ion. The protein is Glucosamine-6-phosphate deaminase of Staphylococcus aureus (strain bovine RF122 / ET3-1).